Here is an 87-residue protein sequence, read N- to C-terminus: Beta-defensin 109C (87 aa).

Residues 1 to 22 (MRLHLLLLILLLFSILLSPVRG) form the signal peptide. Cystine bridges form between cysteine 31–cysteine 59, cysteine 38–cysteine 53, and cysteine 43–cysteine 60.

Belongs to the beta-defensin family.

It localises to the secreted. Functionally, has antibacterial activity. The polypeptide is Beta-defensin 109C (DEFB109C) (Homo sapiens (Human)).